A 188-amino-acid chain; its full sequence is MKANDIKKGNVVEFNNGVYQIRDIERSSPQGRGGNVRFRFIMYSVPGGNKLDASFDADDNLVEVELLRRQSTYSYKDGDAFVFLDDEDYTPYTLDADVIGDDAGYITDGLTGIYVQVIDEQPVAIQLPASVVLEVIETPPELKGGTATKRPKPAKLNTGIEIMVPEYIVNGERVLVNTATGEFAGRAD.

Belongs to the elongation factor P family.

In Stenotrophomonas maltophilia (strain R551-3), this protein is Elongation factor P-like protein.